The sequence spans 385 residues: Glucans biosynthesis protein C (385 aa).

The next 10 membrane-spanning stretches (helical) occupy residues 17–37, 60–80, 91–111, 137–157, 173–193, 212–232, 239–259, 274–294, 311–331, and 338–358; these read AWLM…SHTW, MQVF…RYPL, VGIP…IMLQ, ISHL…VWIF, KFSM…YAVI, FIVM…LAFI, LFTT…VAYL, TESV…FSFG, ASLF…AYIT, and WLGF…LYEI.

The protein belongs to the acyltransferase 3 family. OpgC subfamily.

Its subcellular location is the cell membrane. It participates in glycan metabolism; osmoregulated periplasmic glucan (OPG) biosynthesis. Necessary for the succinyl substitution of periplasmic glucans. Could catalyze the transfer of succinyl residues from the cytoplasmic side of the membrane to the nascent glucan backbones on the periplasmic side of the membrane. The sequence is that of Glucans biosynthesis protein C from Escherichia coli O45:K1 (strain S88 / ExPEC).